The following is a 187-amino-acid chain: Potassium-transporting ATPase KdpC subunit (187 aa).

The helical transmembrane segment at 10-30 threads the bilayer; it reads LVAATMLICVAGYSAAVWAVG.

This sequence belongs to the KdpC family. The system is composed of three essential subunits: KdpA, KdpB and KdpC.

The protein localises to the cell inner membrane. In terms of biological role, part of the high-affinity ATP-driven potassium transport (or Kdp) system, which catalyzes the hydrolysis of ATP coupled with the electrogenic transport of potassium into the cytoplasm. This subunit acts as a catalytic chaperone that increases the ATP-binding affinity of the ATP-hydrolyzing subunit KdpB by the formation of a transient KdpB/KdpC/ATP ternary complex. The polypeptide is Potassium-transporting ATPase KdpC subunit (Parvibaculum lavamentivorans (strain DS-1 / DSM 13023 / NCIMB 13966)).